A 232-amino-acid polypeptide reads, in one-letter code: Protein Mis18-alpha (232 aa).

Ser-36, Ser-39, and Ser-40 each carry phosphoserine. Residues 79 to 177 (PLVFLCSGCR…SVEAIESYIL (99 aa)) enclose the Mis18 domain. 4 residues coordinate Zn(2+): Cys-84, Cys-87, Cys-140, and Cys-143. Lys-161 participates in a covalent cross-link: Glycyl lysine isopeptide (Lys-Gly) (interchain with G-Cter in SUMO2). Residue Ser-232 is modified to Phosphoserine.

Belongs to the mis18 family. Homodimer, and heterodimer with OIP5/MIS18B. Identified in a complex containing MIS18A, OIP5/MIS18B, MIS18BP1, RBBP7 and RBBP4.

It is found in the nucleus. The protein resides in the chromosome. The protein localises to the centromere. In terms of biological role, required for recruitment of CENPA to centromeres and normal chromosome segregation during mitosis. The polypeptide is Protein Mis18-alpha (MIS18A) (Otolemur garnettii (Small-eared galago)).